A 490-amino-acid chain; its full sequence is Serine hydroxymethyltransferase (490 aa).

(6S)-5,6,7,8-tetrahydrofolate is bound by residues Leu179 and 183-185 (GHL). At Lys291 the chain carries N6-(pyridoxal phosphate)lysine. An Isoglutamyl lysine isopeptide (Lys-Gln) (interchain with Q-Cter in protein Pup) cross-link involves residue Lys362.

Belongs to the SHMT family. In terms of assembly, homodimer. The cofactor is pyridoxal 5'-phosphate.

Its subcellular location is the cytoplasm. The enzyme catalyses (6R)-5,10-methylene-5,6,7,8-tetrahydrofolate + glycine + H2O = (6S)-5,6,7,8-tetrahydrofolate + L-serine. Its pathway is one-carbon metabolism; tetrahydrofolate interconversion. The protein operates within amino-acid biosynthesis; glycine biosynthesis; glycine from L-serine: step 1/1. In terms of biological role, catalyzes the reversible interconversion of serine and glycine with tetrahydrofolate (THF) serving as the one-carbon carrier. This reaction serves as the major source of one-carbon groups required for the biosynthesis of purines, thymidylate, methionine, and other important biomolecules. Also exhibits THF-independent aldolase activity toward beta-hydroxyamino acids, producing glycine and aldehydes, via a retro-aldol mechanism. This Mycolicibacterium smegmatis (strain ATCC 700084 / mc(2)155) (Mycobacterium smegmatis) protein is Serine hydroxymethyltransferase.